Reading from the N-terminus, the 720-residue chain is Inactive serine protease PAMR1 (720 aa).

The N-terminal stretch at methionine 1–serine 21 is a signal peptide. Cystine bridges form between cysteine 128/cysteine 150, cysteine 177/cysteine 199, cysteine 239/cysteine 250, cysteine 244/cysteine 260, cysteine 262/cysteine 271, cysteine 280/cysteine 329, cysteine 315/cysteine 342, and cysteine 414/cysteine 442. Positions cysteine 128–isoleucine 236 constitute a CUB domain. The 38-residue stretch at glutamate 235–glutamate 272 folds into the EGF-like domain. 2 Sushi domains span residues arginine 278–lysine 344 and alanine 387–proline 444. The Peptidase S1 domain maps to isoleucine 445–lysine 720. Residue asparagine 451 is glycosylated (N-linked (GlcNAc...) asparagine). Intrachain disulfides connect cysteine 489–cysteine 505, cysteine 630–cysteine 649, and cysteine 661–cysteine 697.

Belongs to the peptidase S1 family.

It is found in the secreted. In terms of biological role, may play a role in regeneration of skeletal muscle. The chain is Inactive serine protease PAMR1 (PAMR1) from Bos taurus (Bovine).